Consider the following 95-residue polypeptide: Small ribosomal subunit protein bS18 (95 aa).

This sequence belongs to the bacterial ribosomal protein bS18 family. As to quaternary structure, part of the 30S ribosomal subunit. Forms a tight heterodimer with protein bS6.

Its function is as follows. Binds as a heterodimer with protein bS6 to the central domain of the 16S rRNA, where it helps stabilize the platform of the 30S subunit. This Rickettsia peacockii (strain Rustic) protein is Small ribosomal subunit protein bS18.